A 481-amino-acid polypeptide reads, in one-letter code: 3-isopropylmalate dehydratase large subunit (481 aa).

Residues C363, C423, and C426 each coordinate [4Fe-4S] cluster. The interval 432–459 is disordered; it reads DQLKPGERSASTSNRNFEGRQGPGGRTH.

It belongs to the aconitase/IPM isomerase family. LeuC type 1 subfamily. Heterodimer of LeuC and LeuD. [4Fe-4S] cluster serves as cofactor.

The enzyme catalyses (2R,3S)-3-isopropylmalate = (2S)-2-isopropylmalate. It functions in the pathway amino-acid biosynthesis; L-leucine biosynthesis; L-leucine from 3-methyl-2-oxobutanoate: step 2/4. Its function is as follows. Catalyzes the isomerization between 2-isopropylmalate and 3-isopropylmalate, via the formation of 2-isopropylmaleate. The sequence is that of 3-isopropylmalate dehydratase large subunit from Corynebacterium glutamicum (strain ATCC 13032 / DSM 20300 / JCM 1318 / BCRC 11384 / CCUG 27702 / LMG 3730 / NBRC 12168 / NCIMB 10025 / NRRL B-2784 / 534).